A 164-amino-acid chain; its full sequence is UPF0262 protein Nham_0287 (164 aa).

The protein belongs to the UPF0262 family.

The protein is UPF0262 protein Nham_0287 of Nitrobacter hamburgensis (strain DSM 10229 / NCIMB 13809 / X14).